Here is a 349-residue protein sequence, read N- to C-terminus: Anthranilate phosphoribosyltransferase (349 aa).

5-phospho-alpha-D-ribose 1-diphosphate contacts are provided by residues Gly82, 85–86 (GD), 92–95 (NVST), 110–118 (KHGNRGVSS), and Ser122. Gly82 serves as a coordination point for anthranilate. Ser94 is a Mg(2+) binding site. Position 113 (Asn113) interacts with anthranilate. Arg168 provides a ligand contact to anthranilate. The Mg(2+) site is built by Asp227 and Glu228.

Belongs to the anthranilate phosphoribosyltransferase family. Homodimer. Mg(2+) is required as a cofactor.

It carries out the reaction N-(5-phospho-beta-D-ribosyl)anthranilate + diphosphate = 5-phospho-alpha-D-ribose 1-diphosphate + anthranilate. Its pathway is amino-acid biosynthesis; L-tryptophan biosynthesis; L-tryptophan from chorismate: step 2/5. Functionally, catalyzes the transfer of the phosphoribosyl group of 5-phosphorylribose-1-pyrophosphate (PRPP) to anthranilate to yield N-(5'-phosphoribosyl)-anthranilate (PRA). This chain is Anthranilate phosphoribosyltransferase, found in Acinetobacter baumannii (strain SDF).